Consider the following 603-residue polypeptide: NAD 5'-nucleotidase (603 aa).

Positions 1–25 (MLLSKKSASFALSAFAMLFTSVALA) are cleaved as a signal peptide. Positions 44, 46, 94, 126, and 227 each coordinate Zn(2+). Substrate contacts are provided by residues Arg397, Arg437, Phe456, and 540 to 546 (YVAGGKD).

Belongs to the 5'-nucleotidase family. Requires Zn(2+) as cofactor.

The protein localises to the periplasm. The enzyme catalyses a ribonucleoside 5'-phosphate + H2O = a ribonucleoside + phosphate. Its function is as follows. Degrades NAD into adenosine and nicotinamide riboside, the latter being subsequently internalized by a specific permease. Also endowed with NAD(P) pyrophosphatase activity. Exhibits a broad substrate specificity, recognizing either mono- or dinucleotide nicotinamides and different adenosine phosphates with a maximal activity on 5'-adenosine monophosphate. The chain is NAD 5'-nucleotidase from Haemophilus influenzae (strain ATCC 51907 / DSM 11121 / KW20 / Rd).